We begin with the raw amino-acid sequence, 479 residues long: Glutamate--tRNA ligase 2 (479 aa).

The 'HIGH' region motif lies at 10-20; the sequence is PSPTGSLHIGG. The 'KMSKS' region motif lies at 243 to 247; it reads KLSKR. Lysine 246 serves as a coordination point for ATP.

The protein belongs to the class-I aminoacyl-tRNA synthetase family. Glutamate--tRNA ligase type 1 subfamily. In terms of assembly, monomer.

It is found in the cytoplasm. It carries out the reaction tRNA(Glu) + L-glutamate + ATP = L-glutamyl-tRNA(Glu) + AMP + diphosphate. Catalyzes the attachment of glutamate to tRNA(Glu) in a two-step reaction: glutamate is first activated by ATP to form Glu-AMP and then transferred to the acceptor end of tRNA(Glu). The protein is Glutamate--tRNA ligase 2 of Thermoanaerobacter pseudethanolicus (strain ATCC 33223 / 39E) (Clostridium thermohydrosulfuricum).